A 319-amino-acid chain; its full sequence is MLTQTRVALRVLKNAHLTLPKRNISQSPALSMRLVQFQSSDSPSPRIGLELQDGGNIIDLNAYDPSLPCRMREFLEMGESALQTAKSALDSNQHILSRSNISLLAPITNPEKIICIGMNYVDHCLEQNVPVPKEPIIFNKFASSIVGPSDPIRIPEESQEVDWEAELAFVIGKKGKNIKEEDAMDHVVGYTVAHDVSARDWQMKKNGKQWLLGKTFDTFCPLGPALVTKDVISDPHNLGIRCRVNGDLVQNSNTNQMVFKTEALIAWASKFVTLNPGDVFLTGTPPGVGVFRKPPVFLKAGDVVRCEIDELGAISNPVV.

Residues 1-31 (MLTQTRVALRVLKNAHLTLPKRNISQSPALS) constitute a mitochondrion transit peptide. Mg(2+)-binding residues include Glu-164, Glu-166, and Asp-195.

It belongs to the FAH family. The cofactor is Mg(2+). It depends on Mn(2+) as a cofactor.

It localises to the mitochondrion. The enzyme catalyses oxaloacetate = enol-oxaloacetate. Tautomerase that converts enol-oxaloacetate, a strong inhibitor of succinate dehydrogenase, to the physiological keto form of oxaloacetate. It is thereby required to maximize aerobic respiration efficiency by preventing succinate dehydrogenase inhibition. In Xenopus laevis (African clawed frog), this protein is Oxaloacetate tautomerase fahd2, mitochondrial (fahd2).